We begin with the raw amino-acid sequence, 449 residues long: Amidophosphoribosyltransferase (449 aa).

The propeptide occupies 1-9 (MRGEIMKEK). Catalysis depends on Cys10, which acts as the Nucleophile. Residues 10 to 224 (CGIFGAYSQD…PGEVIVVKDG (215 aa)) enclose the Glutamine amidotransferase type-2 domain. Cys239 is a [4Fe-4S] cluster binding site. 3 residues coordinate Mg(2+): Ser286, Asp346, and Asp347. 3 residues coordinate [4Fe-4S] cluster: Cys383, Cys432, and Cys435.

The protein in the C-terminal section; belongs to the purine/pyrimidine phosphoribosyltransferase family. The cofactor is Mg(2+). [4Fe-4S] cluster is required as a cofactor.

The catalysed reaction is 5-phospho-beta-D-ribosylamine + L-glutamate + diphosphate = 5-phospho-alpha-D-ribose 1-diphosphate + L-glutamine + H2O. The protein operates within purine metabolism; IMP biosynthesis via de novo pathway; N(1)-(5-phospho-D-ribosyl)glycinamide from 5-phospho-alpha-D-ribose 1-diphosphate: step 1/2. Its function is as follows. Catalyzes the formation of phosphoribosylamine from phosphoribosylpyrophosphate (PRPP) and glutamine. The sequence is that of Amidophosphoribosyltransferase from Pyrococcus horikoshii (strain ATCC 700860 / DSM 12428 / JCM 9974 / NBRC 100139 / OT-3).